Here is a 287-residue protein sequence, read N- to C-terminus: Ribosomal RNA small subunit methyltransferase I (287 aa).

The protein belongs to the methyltransferase superfamily. RsmI family.

The protein resides in the cytoplasm. The enzyme catalyses cytidine(1402) in 16S rRNA + S-adenosyl-L-methionine = 2'-O-methylcytidine(1402) in 16S rRNA + S-adenosyl-L-homocysteine + H(+). Its function is as follows. Catalyzes the 2'-O-methylation of the ribose of cytidine 1402 (C1402) in 16S rRNA. The protein is Ribosomal RNA small subunit methyltransferase I of Helicobacter pylori (strain ATCC 700392 / 26695) (Campylobacter pylori).